The chain runs to 326 residues: mRNA decay activator protein ZFP36 (326 aa).

The tract at residues Met1–Pro15 is necessary for nuclear export. The tract at residues Met1 to Thr100 is necessary and sufficient for the association with mRNA decay enzymes and mRNA decay activation. 2 necessary for localization of ARE-containing mRNAs to processing bodies (PBs) regions span residues Met1–Ala174 and Thr100–Glu326. The segment at Leu13 to Ser66 is disordered. Positions Ser28–Gly49 are enriched in low complexity. Position 60 is a phosphoserine; by MAPKAPK2 (Ser60). Ser66 is modified (phosphoserine). The P-P-P-P-G repeat unit spans residues Pro71 to Gly75. The tract at residues Pro78–Ser102 is disordered. A phosphoserine mark is found at Ser88 and Ser90. Residue Thr92 is modified to Phosphothreonine. Ser93 carries the post-translational modification Phosphoserine. Positions Thr95–Pro168 are necessary for nuclear localization. The interval Thr97–Ala173 is necessary for RNA-binding. 2 consecutive C3H1-type zinc fingers follow at residues Arg103–Gly131 and Lys141–Ser169. A necessary for interaction with PABPN1 region spans residues Arg103–Arg194. Residue Ser169 is modified to Phosphoserine. Residues Ala174 to Glu326 are necessary for mRNA decay activation. Disordered stretches follow at residues Pro175–Pro245 and Ser273–Gly292. At Ser186 the chain carries Phosphoserine; by MAPKAPK2. Position 197 is a phosphoserine (Ser197). Residues Pro198–Gly202 form a P-P-P-P-G repeat. Positions Ala204–Ser216 are enriched in low complexity. Phosphoserine is present on Ser218. One copy of the P-P-P-P-G repeat lies at Pro219–Gly223. Residue Ser228 is modified to Phosphoserine; by MAPK1; in vitro. 3 positions are modified to phosphoserine: Ser276, Ser296, and Ser323. The interval Ala312 to Glu326 is interaction with CNOT1.

As to quaternary structure, associates with cytoplasmic CCR4-NOT and PAN2-PAN3 deadenylase complexes to trigger ARE-containing mRNA deadenylation and decay processes. Part of a mRNA decay activation complex at least composed of poly(A)-specific exoribonucleases CNOT6, EXOSC2 and XRN1 and mRNA-decapping enzymes DCP1A and DCP2. Associates with the RNA exosome complex. Interacts (via phosphorylated form) with 14-3-3 proteins; these interactions promote exclusion of ZFP36 from cytoplasmic stress granules in response to arsenite treatment in a MAPKAPK2-dependent manner and does not prevent CCR4-NOT deadenylase complex recruitment or ZFP36-induced ARE-containing mRNA deadenylation and decay processes. Interacts with 14-3-3 proteins; these interactions occur in response to rapamycin in an Akt-dependent manner. Interacts with AGO2 and AGO4. Interacts (via C-terminus) with CNOT1; this interaction occurs in a RNA-independent manner and induces mRNA deadenylation. Interacts (via N-terminus) with CNOT6. Interacts with CNOT6L. Interacts (via C-terminus) with CNOT7; this interaction occurs in a RNA-independent manner, induces mRNA deadenylation and is inhibited in a phosphorylation MAPKAPK2-dependent manner. Interacts (via unphosphorylated form) with CNOT8; this interaction occurs in a RNA-independent manner and is inhibited in a phosphorylation MAPKAPK2-dependent manner. Interacts with DCP1A. Interacts (via N-terminus) with DCP2. Interacts with EDC3. Interacts (via N-terminus) with EXOSC2. Interacts with heat shock 70 kDa proteins. Interacts with KHSRP; this interaction increases upon cytokine-induced treatment. Interacts with MAP3K4; this interaction enhances the association with SH3KBP1/CIN85. Interacts with MAPKAPK2; this interaction occurs upon skeletal muscle satellite cell activation. Interacts with NCL. Interacts with NUP214; this interaction increases upon lipopolysaccharide (LPS) stimulation. Interacts with PABPC1; this interaction occurs in a RNA-dependent manner. Interacts (via hypophosphorylated form) with PABPN1 (via RRM domain and C-terminal arginine-rich region); this interaction occurs in the nucleus in a RNA-independent manner, decreases in presence of single-stranded poly(A) RNA-oligomer and in a p38 MAPK-dependent-manner and inhibits nuclear poly(A) tail synthesis. Interacts with PAN2. Interacts (via C3H1-type zinc finger domains) with PKM. Interacts (via C3H1-type zinc finger domains) with nuclear RNA poly(A) polymerase. Interacts with PPP2CA; this interaction occurs in LPS-stimulated cells and induces ZFP36 dephosphorylation, and hence may promote ARE-containing mRNAs decay. Interacts (via C-terminus) with PRR5L (via C-terminus); this interaction may accelerate ZFP36-mediated mRNA decay during stress. Interacts (via C-terminus) with SFN; this interaction occurs in a phosphorylation-dependent manner. Interacts (via extreme C-terminal region) with SH3KBP1/CIN85 (via SH3 domains); this interaction enhances MAP3K4-induced phosphorylation of ZFP36 at Ser-66 and Ser-93 and does not alter neither ZFP36 binding to ARE-containing transcripts nor TNF-alpha mRNA decay. Interacts with XRN1. Interacts (via C-terminus and Ser-186 phosphorylated form) with YWHAB; this interaction occurs in a p38/MAPKAPK2-dependent manner, increases cytoplasmic localization of ZFP36 and protects ZFP36 from Ser-186 dephosphorylation by serine/threonine phosphatase 2A, and hence may be crucial for stabilizing ARE-containing mRNAs. Interacts (via phosphorylated form) with YWHAE. Interacts (via C-terminus) with YWHAG; this interaction occurs in a phosphorylation-dependent manner. Interacts with YWHAH; this interaction occurs in a phosphorylation-dependent manner. Interacts with YWHAQ; this interaction occurs in a phosphorylation-dependent manner. Interacts with (via C-terminus) YWHAZ; this interaction occurs in a phosphorylation-dependent manner. Interacts (via P-P-P-P-G repeats) with GIGYF2; the interaction is direct. In terms of assembly, (Microbial infection) Interacts (via C-terminus) with HTLV-1 TAX (via C-terminus); this interaction inhibits HTLV-1 TAX to transactivate viral long terminal repeat (LTR) promoter. Phosphorylated. Phosphorylation at serine and/or threonine residues occurs in a p38 MAPK- and MAPKAPK2-dependent manner. Phosphorylated by MAPKAPK2 at Ser-60 and Ser-186; phosphorylation increases its stability and cytoplasmic localization, promotes binding to 14-3-3 adapter proteins and inhibits the recruitment of cytoplasmic CCR4-NOT and PAN2-PAN3 deadenylase complexes to the mRNA decay machinery, thereby inhibiting ZFP36-induced ARE-containing mRNA deadenylation and decay processes. Phosphorylation by MAPKAPK2 does not impair ARE-containing RNA-binding. Phosphorylated in a MAPKAPK2- and p38 MAPK-dependent manner upon skeletal muscle satellite cell activation; this phosphorylation inhibits ZFP36-mediated mRNA decay activity, and hence stabilizes MYOD1 mRNA. Phosphorylated by MAPK1 upon mitogen stimulation. Phosphorylated at Ser-66 and Ser-93; these phosphorylations increase in a SH3KBP1-dependent manner. Phosphorylated at serine and threonine residues in a pyruvate kinase PKM- and p38 MAPK-dependent manner. Phosphorylation at Ser-60 may participate in the PKM-mediated degradation of ZFP36 in a p38 MAPK-dependent manner. Dephosphorylated by serine/threonine phosphatase 2A at Ser-186. Post-translationally, ubiquitinated; pyruvate kinase (PKM)-dependent ubiquitination leads to proteasomal degradation through a p38 MAPK signaling pathway. As to expression, expressed in both basal and suprabasal epidermal layers. Expressed in epidermal keratinocytes. Expressed strongly in mature dendritic cells. Expressed in immature dendritic cells (at protein level).

It is found in the nucleus. Its subcellular location is the cytoplasm. The protein resides in the cytoplasmic granule. It localises to the P-body. In terms of biological role, zinc-finger RNA-binding protein that destabilizes several cytoplasmic AU-rich element (ARE)-containing mRNA transcripts by promoting their poly(A) tail removal or deadenylation, and hence provide a mechanism for attenuating protein synthesis. Acts as an 3'-untranslated region (UTR) ARE mRNA-binding adapter protein to communicate signaling events to the mRNA decay machinery. Recruits deadenylase CNOT7 (and probably the CCR4-NOT complex) via association with CNOT1, and hence promotes ARE-mediated mRNA deadenylation. Functions also by recruiting components of the cytoplasmic RNA decay machinery to the bound ARE-containing mRNAs. Self regulates by destabilizing its own mRNA. Binds to 3'-UTR ARE of numerous mRNAs and of its own mRNA. Plays a role in anti-inflammatory responses; suppresses tumor necrosis factor (TNF)-alpha production by stimulating ARE-mediated TNF-alpha mRNA decay and several other inflammatory ARE-containing mRNAs in interferon (IFN)- and/or lipopolysaccharide (LPS)-induced macrophages. Also plays a role in the regulation of dendritic cell maturation at the post-transcriptional level, and hence operates as part of a negative feedback loop to limit the inflammatory response. Promotes ARE-mediated mRNA decay of hypoxia-inducible factor HIF1A mRNA during the response of endothelial cells to hypoxia. Positively regulates early adipogenesis of preadipocytes by promoting ARE-mediated mRNA decay of immediate early genes (IEGs). Negatively regulates hematopoietic/erythroid cell differentiation by promoting ARE-mediated mRNA decay of the transcription factor STAT5B mRNA. Plays a role in maintaining skeletal muscle satellite cell quiescence by promoting ARE-mediated mRNA decay of the myogenic determination factor MYOD1 mRNA. Associates also with and regulates the expression of non-ARE-containing target mRNAs at the post-transcriptional level, such as MHC class I mRNAs. Participates in association with argonaute RISC catalytic components in the ARE-mediated mRNA decay mechanism; assists microRNA (miRNA) targeting ARE-containing mRNAs. May also play a role in the regulation of cytoplasmic mRNA decapping; enhances decapping of ARE-containing RNAs, in vitro. Involved in the delivery of target ARE-mRNAs to processing bodies (PBs). In addition to its cytosolic mRNA-decay function, affects nuclear pre-mRNA processing. Negatively regulates nuclear poly(A)-binding protein PABPN1-stimulated polyadenylation activity on ARE-containing pre-mRNA during LPS-stimulated macrophages. Also involved in the regulation of stress granule (SG) and P-body (PB) formation and fusion. Plays a role in the regulation of keratinocyte proliferation, differentiation and apoptosis. Plays a role as a tumor suppressor by inhibiting cell proliferation in breast cancer cells. (Microbial infection) Negatively regulates HTLV-1 TAX-dependent transactivation of viral long terminal repeat (LTR) promoter. In Homo sapiens (Human), this protein is mRNA decay activator protein ZFP36.